A 568-amino-acid polypeptide reads, in one-letter code: Probable inactive poly [ADP-ribose] polymerase SRO1 (568 aa).

Residues 1-18 are compositionally biased toward basic and acidic residues; the sequence is MEAKIVKVSDSSYKDGLG. The interval 1–32 is disordered; sequence MEAKIVKVSDSSYKDGLGKKRKHPGNYTPYDS. Residues 77-152 enclose the WWE domain; that stretch reads RYFSYYKKTG…ETGVKTQLAW (76 aa). 2 disordered regions span residues 220–241 and 453–500; these read DFQAVQRSSNGPNDEASEDSCS and ILPT…RRPR. Residues 245–463 form the PARP catalytic domain; sequence DDAVEKWDKT…LPTTQSRHES (219 aa). Residues 497-568 form the RST domain; sequence RRPRSPIMPF…TITGLQRSLG (72 aa).

Interacts with DREB2A, DREB2B, DREB2C and NAC082. In terms of tissue distribution, expressed in young developing tissues, such as young leaves and flowers and root tips. In mature plants, expressed in vasculature of leaves and roots.

The protein resides in the nucleus matrix. Probable inactive ADP-ribosyltransferase that functions with RCD1 to regulate oxidative stress, hormonal and developmental responses. May regulate some stress-responsive genes. Seems to play a smaller developmental role than R. In Arabidopsis thaliana (Mouse-ear cress), this protein is Probable inactive poly [ADP-ribose] polymerase SRO1 (SRO1).